Reading from the N-terminus, the 37-residue chain is Large ribosomal subunit protein bL36 (37 aa).

This sequence belongs to the bacterial ribosomal protein bL36 family.

The protein is Large ribosomal subunit protein bL36 of Solibacter usitatus (strain Ellin6076).